A 142-amino-acid chain; its full sequence is Glia maturation factor gamma (142 aa).

Serine 2 carries the N-acetylserine modification. In terms of domain architecture, ADF-H spans 4-139 (SLVVCDVDPE…NETWLKEKLA (136 aa)).

Belongs to the actin-binding proteins ADF family. GMF subfamily. Expressed in rat thymus, testis, and spleen. Is present predominantly in proliferative and differentiative organs.

This is Glia maturation factor gamma (Gmfg) from Rattus norvegicus (Rat).